The sequence spans 928 residues: Periplasmic nitrate reductase (928 aa).

The segment at residues 1–33 is a signal peptide (tat-type signal); sequence MAFSRREFLKSAAAASAASAVGMSVPSQLLAQA. The 4Fe-4S Mo/W bis-MGD-type domain maps to 40-96; the sequence is WRWDKSVCRFCGTGCGIMVATKNDQIVAVKGDPAAPVNRGLNCIKGYFNAKIMYGAD. 4 residues coordinate [4Fe-4S] cluster: C47, C50, C54, and C82. Residues K84, Q152, N177, C181, 214-221, 265-267, M422, Q426, N532, 557-558, K580, D607, and 818-827 each bind Mo-bis(molybdopterin guanine dinucleotide); these read WGANMAEM, QTD, SD, and TGRVLEHWHS. Substrate is bound at residue W894. 2 residues coordinate Mo-bis(molybdopterin guanine dinucleotide): N902 and K919.

Belongs to the prokaryotic molybdopterin-containing oxidoreductase family. NasA/NapA/NarB subfamily. As to quaternary structure, component of the periplasmic nitrate reductase NapAB complex composed of NapA and NapB. The cofactor is [4Fe-4S] cluster. It depends on Mo-bis(molybdopterin guanine dinucleotide) as a cofactor. In terms of processing, predicted to be exported by the Tat system. The position of the signal peptide cleavage has not been experimentally proven.

The protein localises to the periplasm. The catalysed reaction is 2 Fe(II)-[cytochrome] + nitrate + 2 H(+) = 2 Fe(III)-[cytochrome] + nitrite + H2O. Catalytic subunit of the periplasmic nitrate reductase complex NapAB. Receives electrons from NapB and catalyzes the reduction of nitrate to nitrite. The chain is Periplasmic nitrate reductase from Wolinella succinogenes (strain ATCC 29543 / DSM 1740 / CCUG 13145 / JCM 31913 / LMG 7466 / NCTC 11488 / FDC 602W) (Vibrio succinogenes).